The primary structure comprises 569 residues: Peroxisomal targeting signal receptor (569 aa).

C9 is covalently cross-linked (Glycyl cysteine thioester (Cys-Gly) (interchain with G-Cter in ubiquitin)). Residues 10–32 are amphipathic helix 1 (AH1); sequence AANANPLAQFFKQSQHDTSLEQS. K21 is covalently cross-linked (Glycyl lysine isopeptide (Lys-Gly) (interchain with G-Cter in ubiquitin)). The disordered stretch occupies residues 23 to 42; that stretch reads SQHDTSLEQSLRNSAHDTHQ. Positions 57 to 72 are amphipathic helix 2 (AH2); sequence RAHMEQFMNQSTPFNF. 2 short sequence motifs (wxxxF/Y motif) span residues 118–122 and 183–187; these read WSSEF and WEQQF. Residues 218–234 form an amphipathic helix 4 (AH4) region; sequence FDQVWDNIQETYADNML. The WxxxF/Y motif 3 signature appears at 243-247; sequence WEKDF. 7 TPR repeats span residues 272-305, 306-339, 340-377, 378-415, 416-449, 450-483, and 484-517; these read LDAYEIGIKLMESGAKLSEAALAFEAAVEQNPGH, VDAWLRLGQVQTQNEKELAGIAALEKCLELSPQN, LVALMTLAISYINEGYDNAAFATLERWIETKYPEVAER, ARNANPDIQADDRFSLNKRVTQLFIKAAQLSPEGANMD, SEVQTGLGVLFYSMEEYSKTLDCFQAAIEHNPND, ALAWNRLGASLANSNKPEQAIEAYSRTLQLNPNF, and VRARYNLGVSFINMGMYRDAVDHLLTGLSMHEVE.

This sequence belongs to the peroxisomal targeting signal receptor family. As to quaternary structure, interacts (via WxxxF/Y and LVxEF motifs) with PEX14; promoting translocation through the PEX13-PEX14 docking complex. Post-translationally, monoubiquitinated at Cys-9 by PEX2 during PEX5 passage through the retrotranslocation channel: monoubiquitination acts as a signal for PEX5 extraction and is required for proper export from peroxisomes and recycling. When PEX5 recycling is compromised, polyubiquitinated at Lys-21 by PEX10 during its passage through the retrotranslocation channel, leading to its degradation.

The protein localises to the cytoplasm. It is found in the cytosol. The protein resides in the peroxisome matrix. Functionally, receptor that mediates peroxisomal import of proteins containing a C-terminal PTS1-type tripeptide peroxisomal targeting signal (SKL-type). Binds to cargo proteins containing a PTS1 peroxisomal targeting signal in the cytosol, and translocates them into the peroxisome matrix by passing through the PEX13-PEX14 docking complex along with cargo proteins. PEX5 receptor is then retrotranslocated into the cytosol, leading to release of bound cargo in the peroxisome matrix, and reset for a subsequent peroxisome import cycle. This is Peroxisomal targeting signal receptor (PEX5) from Pichia angusta (Yeast).